We begin with the raw amino-acid sequence, 361 residues long: UDP-D-xylose:L-fucose alpha-1,3-D-xylosyltransferase 1 (361 aa).

The segment at 1–21 (MEQKQHILKQSTFSSSPSSYS) is disordered. Residues 1 to 34 (MEQKQHILKQSTFSSSPSSYSSISDRPISLLSRN) lie on the Cytoplasmic side of the membrane. The span at 11-21 (STFSSSPSSYS) shows a compositional bias: low complexity. A helical; Signal-anchor for type II membrane protein membrane pass occupies residues 35 to 55 (GLLLLLLALVLLLGVLLPWPG). At 56–361 (SPLFLFPNRL…ALESPLGKLE (306 aa)) the chain is on the lumenal side. N-linked (GlcNAc...) asparagine glycans are attached at residues asparagine 92 and asparagine 167. The short motif at 190–192 (DVD) is the DXD motif element. N-linked (GlcNAc...) asparagine glycans are attached at residues asparagine 222 and asparagine 286.

The protein belongs to the glycosyltransferase 77 family. Requires Mn(2+) as cofactor. The cofactor is Mg(2+). In terms of processing, glycosylated. Expressed in roots, rosette leaves, cauline leaves and stems.

It is found in the golgi apparatus membrane. Catalyzes the transfer of D-xylose from UDP-alpha-D-xylose onto L-fucose. Probably involved in the biosynthesis of rhamnogalacturonan II (RG-II) through xylosylation of the internal fucose moiety of the A-chain of RG-II, a structurally complex pectic polysaccharide of the primary cell wall. RG-II is essential for the cell wall integrity of rapidly growing tissues such as roots and pollen tube growth and elongation. The polypeptide is UDP-D-xylose:L-fucose alpha-1,3-D-xylosyltransferase 1 (Arabidopsis thaliana (Mouse-ear cress)).